We begin with the raw amino-acid sequence, 57 residues long: Large ribosomal subunit protein eL20 (57 aa).

The protein belongs to the eukaryotic ribosomal protein eL20 family. Part of the 50S ribosomal subunit. Binds 23S rRNA.

The protein is Large ribosomal subunit protein eL20 of Archaeoglobus fulgidus (strain ATCC 49558 / DSM 4304 / JCM 9628 / NBRC 100126 / VC-16).